Reading from the N-terminus, the 265-residue chain is Glutamate racemase (265 aa).

Substrate is bound by residues Asp-7 to Ser-8 and Tyr-39 to Gly-40. Residue Cys-70 is the Proton donor/acceptor of the active site. Asn-71 to Thr-72 lines the substrate pocket. Residue Cys-182 is the Proton donor/acceptor of the active site. Substrate is bound at residue Thr-183–His-184.

The protein belongs to the aspartate/glutamate racemases family.

The enzyme catalyses L-glutamate = D-glutamate. Its pathway is cell wall biogenesis; peptidoglycan biosynthesis. Functionally, provides the (R)-glutamate required for cell wall biosynthesis. The sequence is that of Glutamate racemase from Lachnospira eligens (strain ATCC 27750 / DSM 3376 / VPI C15-48 / C15-B4) (Eubacterium eligens).